The primary structure comprises 205 residues: Holliday junction branch migration complex subunit RuvA (205 aa).

Positions 1 to 64 (MIGKLRGIVD…DEAIRLIGFT (64 aa)) are domain I. The interval 65–143 (TDSEREWFRL…DSMGLSAALE (79 aa)) is domain II. Positions 144–152 (VGVNGEAVS) are flexible linker. Residues 153–205 (SVSAPARDAVSALVNLGYPQAQAMGAVAAAAKRLDDAASTEQLIRHGLKELAR) are domain III.

Belongs to the RuvA family. In terms of assembly, homotetramer. Forms an RuvA(8)-RuvB(12)-Holliday junction (HJ) complex. HJ DNA is sandwiched between 2 RuvA tetramers; dsDNA enters through RuvA and exits via RuvB. An RuvB hexamer assembles on each DNA strand where it exits the tetramer. Each RuvB hexamer is contacted by two RuvA subunits (via domain III) on 2 adjacent RuvB subunits; this complex drives branch migration. In the full resolvosome a probable DNA-RuvA(4)-RuvB(12)-RuvC(2) complex forms which resolves the HJ.

It is found in the cytoplasm. Functionally, the RuvA-RuvB-RuvC complex processes Holliday junction (HJ) DNA during genetic recombination and DNA repair, while the RuvA-RuvB complex plays an important role in the rescue of blocked DNA replication forks via replication fork reversal (RFR). RuvA specifically binds to HJ cruciform DNA, conferring on it an open structure. The RuvB hexamer acts as an ATP-dependent pump, pulling dsDNA into and through the RuvAB complex. HJ branch migration allows RuvC to scan DNA until it finds its consensus sequence, where it cleaves and resolves the cruciform DNA. This Parvibaculum lavamentivorans (strain DS-1 / DSM 13023 / NCIMB 13966) protein is Holliday junction branch migration complex subunit RuvA.